Here is a 350-residue protein sequence, read N- to C-terminus: Holliday junction branch migration complex subunit RuvB (350 aa).

The large ATPase domain (RuvB-L) stretch occupies residues 1 to 183 (MSAERLVNPH…FVAVHRLVFY (183 aa)). ATP-binding positions include Leu22, Arg23, Gly64, Lys67, Thr68, Ser69, 130-132 (EDF), Arg173, Tyr183, and Arg220. Thr68 is a binding site for Mg(2+). The interval 184-254 (SDAAMTEIVS…VAREALAQLE (71 aa)) is small ATPAse domain (RuvB-S). Positions 257–350 (ELGLDENDRR…ESGPQQGTLF (94 aa)) are head domain (RuvB-H). DNA contacts are provided by Arg312 and Arg317.

This sequence belongs to the RuvB family. Homohexamer. Forms an RuvA(8)-RuvB(12)-Holliday junction (HJ) complex. HJ DNA is sandwiched between 2 RuvA tetramers; dsDNA enters through RuvA and exits via RuvB. An RuvB hexamer assembles on each DNA strand where it exits the tetramer. Each RuvB hexamer is contacted by two RuvA subunits (via domain III) on 2 adjacent RuvB subunits; this complex drives branch migration. In the full resolvosome a probable DNA-RuvA(4)-RuvB(12)-RuvC(2) complex forms which resolves the HJ.

The protein localises to the cytoplasm. It carries out the reaction ATP + H2O = ADP + phosphate + H(+). The RuvA-RuvB-RuvC complex processes Holliday junction (HJ) DNA during genetic recombination and DNA repair, while the RuvA-RuvB complex plays an important role in the rescue of blocked DNA replication forks via replication fork reversal (RFR). RuvA specifically binds to HJ cruciform DNA, conferring on it an open structure. The RuvB hexamer acts as an ATP-dependent pump, pulling dsDNA into and through the RuvAB complex. RuvB forms 2 homohexamers on either side of HJ DNA bound by 1 or 2 RuvA tetramers; 4 subunits per hexamer contact DNA at a time. Coordinated motions by a converter formed by DNA-disengaged RuvB subunits stimulates ATP hydrolysis and nucleotide exchange. Immobilization of the converter enables RuvB to convert the ATP-contained energy into a lever motion, pulling 2 nucleotides of DNA out of the RuvA tetramer per ATP hydrolyzed, thus driving DNA branch migration. The RuvB motors rotate together with the DNA substrate, which together with the progressing nucleotide cycle form the mechanistic basis for DNA recombination by continuous HJ branch migration. Branch migration allows RuvC to scan DNA until it finds its consensus sequence, where it cleaves and resolves cruciform DNA. This is Holliday junction branch migration complex subunit RuvB from Chloroflexus aggregans (strain MD-66 / DSM 9485).